The sequence spans 201 residues: 3-isopropylmalate dehydratase small subunit (201 aa).

Belongs to the LeuD family. LeuD type 1 subfamily. Heterodimer of LeuC and LeuD.

It catalyses the reaction (2R,3S)-3-isopropylmalate = (2S)-2-isopropylmalate. Its pathway is amino-acid biosynthesis; L-leucine biosynthesis; L-leucine from 3-methyl-2-oxobutanoate: step 2/4. Catalyzes the isomerization between 2-isopropylmalate and 3-isopropylmalate, via the formation of 2-isopropylmaleate. The polypeptide is 3-isopropylmalate dehydratase small subunit (Xanthobacter autotrophicus (strain ATCC BAA-1158 / Py2)).